The following is a 260-amino-acid chain: Flagellar basal-body rod protein FlgG (260 aa).

Belongs to the flagella basal body rod proteins family. As to quaternary structure, the basal body constitutes a major portion of the flagellar organelle and consists of four rings (L,P,S, and M) mounted on a central rod. The rod consists of about 26 subunits of FlgG in the distal portion, and FlgB, FlgC and FlgF are thought to build up the proximal portion of the rod with about 6 subunits each.

Its subcellular location is the bacterial flagellum basal body. This is Flagellar basal-body rod protein FlgG (flgG) from Salmonella typhi.